We begin with the raw amino-acid sequence, 413 residues long: MAITLSATSLPISAADHHPLPLTVGVLGSGHAGTALAAWFASRHVPTALWAPADHPGSISAIKANEGVITTEGMINGPFRVSACDDLAAVIRSSRVLIIVTRADVHDSFVNELANFNGELATKDIVVVCGHGFSIKYERQLRFKRIFETDNSPITSKLSDQKKCNVNIKEMKASFGLSCFPIHRDDAGVIDLPEDTKNIFAQLFSARIICIPPLQVLFFSNCITHAVPAVMNIGRLRDPANSLTKRAEKWLLELDERTPRAEKGFFFYGEGSNTYVCNVQEQIDHERRKVAAACGLRLNSLLQECNDEYDTDYETLREYCLAPSPHNVHHACPDNMEHRYFSEELCSLEDVAAIAAIANIELPLTHAFINIIHAGKGKINPTGKSSSVIGNFSSSDLIRFGATHVFNKDEMVE.

The protein belongs to the lysopine/nopaline/octopine/opine/vitopine dehydrogenases family. Homotetramer.

The catalysed reaction is D-nopaline + NADP(+) + H2O = L-arginine + 2-oxoglutarate + NADPH + H(+). The chain is D-nopaline dehydrogenase (nos) from Agrobacterium tumefaciens (strain T37).